The sequence spans 459 residues: Argininosuccinate lyase (459 aa).

Belongs to the lyase 1 family. Argininosuccinate lyase subfamily.

It localises to the cytoplasm. It catalyses the reaction 2-(N(omega)-L-arginino)succinate = fumarate + L-arginine. It functions in the pathway amino-acid biosynthesis; L-arginine biosynthesis; L-arginine from L-ornithine and carbamoyl phosphate: step 3/3. This chain is Argininosuccinate lyase, found in Geobacillus sp. (strain WCH70).